Reading from the N-terminus, the 259-residue chain is Proteasome subunit alpha (259 aa).

This sequence belongs to the peptidase T1A family. In terms of assembly, the 20S proteasome core is composed of 14 alpha and 14 beta subunits that assemble into four stacked heptameric rings, resulting in a barrel-shaped structure. The two inner rings, each composed of seven catalytic beta subunits, are sandwiched by two outer rings, each composed of seven alpha subunits. The catalytic chamber with the active sites is on the inside of the barrel. Has a gated structure, the ends of the cylinder being occluded by the N-termini of the alpha-subunits. Is capped at one or both ends by the proteasome regulatory ATPase, PAN.

It is found in the cytoplasm. Its activity is regulated as follows. The formation of the proteasomal ATPase PAN-20S proteasome complex, via the docking of the C-termini of PAN into the intersubunit pockets in the alpha-rings, triggers opening of the gate for substrate entry. Interconversion between the open-gate and close-gate conformations leads to a dynamic regulation of the 20S proteasome proteolysis activity. Its function is as follows. Component of the proteasome core, a large protease complex with broad specificity involved in protein degradation. The protein is Proteasome subunit alpha of Methanococcus maripaludis (strain C7 / ATCC BAA-1331).